A 392-amino-acid chain; its full sequence is S-adenosylmethionine synthase (392 aa).

His20 contributes to the ATP binding site. Mg(2+) is bound at residue Asp22. Glu48 is a binding site for K(+). L-methionine is bound by residues Glu61 and Gln106. Residues 106-116 (QSQDIINAIKK) form a flexible loop region. ATP-binding positions include 171-173 (DSK), Asp248, 254-255 (RK), Ala271, and Lys275. Residue Asp248 participates in L-methionine binding. Lys279 serves as a coordination point for L-methionine.

This sequence belongs to the AdoMet synthase family. Homotetramer; dimer of dimers. Mg(2+) is required as a cofactor. The cofactor is K(+).

It is found in the cytoplasm. The catalysed reaction is L-methionine + ATP + H2O = S-adenosyl-L-methionine + phosphate + diphosphate. It functions in the pathway amino-acid biosynthesis; S-adenosyl-L-methionine biosynthesis; S-adenosyl-L-methionine from L-methionine: step 1/1. In terms of biological role, catalyzes the formation of S-adenosylmethionine (AdoMet) from methionine and ATP. The overall synthetic reaction is composed of two sequential steps, AdoMet formation and the subsequent tripolyphosphate hydrolysis which occurs prior to release of AdoMet from the enzyme. The protein is S-adenosylmethionine synthase of Borrelia garinii subsp. bavariensis (strain ATCC BAA-2496 / DSM 23469 / PBi) (Borreliella bavariensis).